Reading from the N-terminus, the 304-residue chain is Glycine--tRNA ligase alpha subunit (304 aa).

Belongs to the class-II aminoacyl-tRNA synthetase family. Tetramer of two alpha and two beta subunits.

Its subcellular location is the cytoplasm. It catalyses the reaction tRNA(Gly) + glycine + ATP = glycyl-tRNA(Gly) + AMP + diphosphate. In Tolumonas auensis (strain DSM 9187 / NBRC 110442 / TA 4), this protein is Glycine--tRNA ligase alpha subunit.